A 163-amino-acid polypeptide reads, in one-letter code: Odorant-binding protein 1a (163 aa).

A signal peptide spans methionine 1–alanine 16. 2 cysteine pairs are disulfide-bonded: cysteine 50–cysteine 54 and cysteine 69–cysteine 161.

This sequence belongs to the calycin superfamily. Lipocalin family. May form a heterodimer with OBP1B. Post-translationally, the N-terminus may be blocked. Expressed in nasal mucosa (at protein level). Specifically detected in septal and lateral nasal glands.

The protein localises to the secreted. Binds the chemical odorant 2-isobutyl-3-methoxypyrazine. The sequence is that of Odorant-binding protein 1a from Mus musculus (Mouse).